A 203-amino-acid chain; its full sequence is MTQDRPLLAVQEALKKCFPVVEEQQGLWQSALRDCQPLLSSLSNLAEQLQAAQNLRFEDVPALRAFPDLKERLRRKQLVAGDIVLDKLGERLAILLKVRDMVSSHVERVFQIYEQHADTVGIDAVLQPSAVSPSVADMLEWLQDIERHYRKSYLKRKYLLSSIQWGDLANIQALPKAWDRISKDEHQDLVQDILLNVSFFLEE.

As to quaternary structure, part of the 55LCC heterohexameric ATPase complex composed at least of AIRIM, AFG2A, AFG2B and CINP. Does not associate with pre-60S ribosomal particles. Post-translationally, phosphorylated on serines by CK2 kinase.

The protein resides in the nucleus. It is found in the cytoplasm. In terms of biological role, part of the 55LCC heterohexameric ATPase complex which is chromatin-associated and promotes replisome proteostasis to maintain replication fork progression and genome stability. Required for replication fork progression, sister chromatid cohesion, and chromosome stability. The ATPase activity is specifically enhanced by replication fork DNA and is coupled to cysteine protease-dependent cleavage of replisome substrates in response to replication fork damage. Uses ATPase activity to process replisome substrates in S-phase, facilitating their proteolytic turnover from chromatin to ensure DNA replication and mitotic fidelity. Involved in the cytoplasmic maturation steps of pre-60S ribosomal particles by promoting the release of shuttling protein RSL24D1/RLP24 from the pre-ribosomal particles. The chain is AFG2-interacting ribosome maturation factor from Homo sapiens (Human).